The primary structure comprises 98 residues: Acylphosphatase (98 aa).

The 87-residue stretch at 12 to 98 folds into the Acylphosphatase-like domain; sequence TYYVRVRGVV…DKRFERFQQH (87 aa). Active-site residues include arginine 27 and asparagine 45.

It belongs to the acylphosphatase family.

The enzyme catalyses an acyl phosphate + H2O = a carboxylate + phosphate + H(+). This Burkholderia mallei (strain NCTC 10247) protein is Acylphosphatase (acyP).